The following is a 69-amino-acid chain: uncharacterized protein (69 aa).

A signal peptide spans 1–18 (MAMLWISMFIIMRKYGRS). The disordered stretch occupies residues 17 to 69 (RSSSSSSSSSSSSSSSSSSSSSSSSSSSSSSSSSSSSSSSSGSSSNSNRVVVV). The span at 18 to 61 (SSSSSSSSSSSSSSSSSSSSSSSSSSSSSSSSSSSSSSSSGSSS) shows a compositional bias: low complexity.

It is found in the secreted. This is an uncharacterized protein from Dictyostelium discoideum (Social amoeba).